A 644-amino-acid chain; its full sequence is DNA gyrase subunit B (644 aa).

The Toprim domain maps to 429-543; it reads CEIFLVEGDS…AGYVYIAQPP (115 aa). 3 residues coordinate Mg(2+): Glu-435, Asp-508, and Asp-510.

It belongs to the type II topoisomerase GyrB family. In terms of assembly, heterotetramer, composed of two GyrA and two GyrB chains. In the heterotetramer, GyrA contains the active site tyrosine that forms a transient covalent intermediate with DNA, while GyrB binds cofactors and catalyzes ATP hydrolysis. The cofactor is Mg(2+). Requires Mn(2+) as cofactor. It depends on Ca(2+) as a cofactor.

It localises to the cytoplasm. The enzyme catalyses ATP-dependent breakage, passage and rejoining of double-stranded DNA.. A type II topoisomerase that negatively supercoils closed circular double-stranded (ds) DNA in an ATP-dependent manner to modulate DNA topology and maintain chromosomes in an underwound state. Negative supercoiling favors strand separation, and DNA replication, transcription, recombination and repair, all of which involve strand separation. Also able to catalyze the interconversion of other topological isomers of dsDNA rings, including catenanes and knotted rings. Type II topoisomerases break and join 2 DNA strands simultaneously in an ATP-dependent manner. In Staphylococcus aureus (strain Mu50 / ATCC 700699), this protein is DNA gyrase subunit B.